The following is a 239-amino-acid chain: Fatty acid metabolism regulator protein (239 aa).

In terms of domain architecture, HTH gntR-type spans 6-74; the sequence is QSPAGFAEEY…HGKPTKVNNF (69 aa). Residues 34–53 constitute a DNA-binding region (H-T-H motif); sequence ERELSELIGVTRTTLREVLQ.

Homodimer.

The protein resides in the cytoplasm. Multifunctional regulator of fatty acid metabolism. The protein is Fatty acid metabolism regulator protein of Serratia proteamaculans (strain 568).